An 89-amino-acid chain; its full sequence is Large ribosomal subunit protein bL27 (89 aa).

Residues 1–22 (MAHKKAGGSSRNGRDSAGRRLG) are disordered.

Belongs to the bacterial ribosomal protein bL27 family.

This Sphingopyxis alaskensis (strain DSM 13593 / LMG 18877 / RB2256) (Sphingomonas alaskensis) protein is Large ribosomal subunit protein bL27.